The sequence spans 620 residues: LEAF RUST 10 DISEASE-RESISTANCE LOCUS RECEPTOR-LIKE PROTEIN KINASE-like 2.3 (620 aa).

The N-terminal stretch at 1 to 30 (MDSLSSMGFQTASFFLILLFLFYHLPCVPS) is a signal peptide. Residues 31-256 (QQERSRLCKP…NNGTYSDNRP (226 aa)) lie on the Extracellular side of the membrane. 9 N-linked (GlcNAc...) asparagine glycosylation sites follow: N75, N85, N93, N132, N148, N162, N189, N231, and N248. Residues 257–277 (FLVTIGTVLGSILCVCVVLFL) traverse the membrane as a helical segment. The Cytoplasmic portion of the chain corresponds to 278-620 (AFYLNERRIA…SVESSIYSEV (343 aa)). The region spanning 314–596 (KSFTEVVGRG…SLDPPPKPLL (283 aa)) is the Protein kinase domain. Residues 320-328 (VGRGGFGTV) and K342 each bind ATP. The Proton acceptor role is filled by D431. Residues 586–620 (DSLDPPPKPLLHMPMQNNNAESSQLSVESSIYSEV) form a disordered region. A compositionally biased stretch (polar residues) spans 600–620 (MQNNNAESSQLSVESSIYSEV).

It belongs to the protein kinase superfamily. Ser/Thr protein kinase family.

Its subcellular location is the membrane. It catalyses the reaction L-seryl-[protein] + ATP = O-phospho-L-seryl-[protein] + ADP + H(+). It carries out the reaction L-threonyl-[protein] + ATP = O-phospho-L-threonyl-[protein] + ADP + H(+). The chain is LEAF RUST 10 DISEASE-RESISTANCE LOCUS RECEPTOR-LIKE PROTEIN KINASE-like 2.3 from Arabidopsis thaliana (Mouse-ear cress).